The following is a 664-amino-acid chain: Macoilin-1 (664 aa).

A run of 4 helical transmembrane segments spans residues 28 to 48 (TFLY…DFVL), 75 to 95 (AFSV…LLFI), 120 to 140 (VCLP…AIRF), and 154 to 174 (FAAH…KSYV). The interval 206 to 225 (QMLQRQERETEEATSKGMSE) is disordered. Residues 210 to 219 (RQERETEEAT) are compositionally biased toward basic and acidic residues. 5 N-linked (GlcNAc...) asparagine glycosylation sites follow: N234, N336, N339, N348, and N655. Disordered regions lie at residues 315 to 364 (VGAG…LAPH) and 644 to 664 (FMDT…PLKK). Over residues 334–348 (SHNSTNGSVPSSSSN) the composition is skewed to low complexity. The span at 644 to 658 (FMDTSPSSLDPNASV) shows a compositional bias: polar residues.

It belongs to the macoilin family.

The protein localises to the nucleus membrane. It localises to the rough endoplasmic reticulum membrane. Its function is as follows. May play a role in the regulation of neuronal activity. This chain is Macoilin-1, found in Danio rerio (Zebrafish).